The sequence spans 445 residues: Histamine H3 receptor (445 aa).

Topologically, residues 1 to 39 (MERAPPDGLMNASGALAGEAAAAGGARGFSAAWTAVLAA) are extracellular. A glycan (N-linked (GlcNAc...) asparagine) is linked at Asn11. A helical membrane pass occupies residues 40–60 (LMALLIVATVLGNALVMLAFV). Residues 61–70 (ADSSLRTQNN) are Cytoplasmic-facing. A helical membrane pass occupies residues 71-91 (FFLLNLAISDFLVGAFCIPLY). At 92–108 (VPYVLTGRWTFGRGLCK) the chain is on the extracellular side. An intrachain disulfide couples Cys107 to Cys188. The chain crosses the membrane as a helical span at residues 109 to 129 (LWLVVDYLLCASSVFNIVLIS). Over 130-156 (YDRFLSVTRAVSYRAQQGDTRRAVRKM) the chain is Cytoplasmic. Residues 157–177 (ALVWVLAFLLYGPAILSWEYL) form a helical membrane-spanning segment. The Extracellular segment spans residues 178 to 196 (SGGSSIPEGHCYAEFFYNW). A helical transmembrane segment spans residues 197-217 (YFLITASTLEFFTPFLSVTFF). At 218–359 (NLSIYLNIQR…LSRDKKVAKS (142 aa)) the chain is on the cytoplasmic side. Disordered stretches follow at residues 234–259 (DGGR…PSCW) and 273–336 (HRYG…LEKR). Over residues 241 to 256 (PEPPPDAQPSPPPAPP) the composition is skewed to pro residues. Over residues 289–299 (AGLGGGSGGGA) the composition is skewed to gly residues. Residues 300 to 312 (AASPTSSSGSSSR) are compositionally biased toward low complexity. Residues 360 to 380 (LAIIVSIFGLCWAPYTLLMII) form a helical membrane-spanning segment. Topologically, residues 381–396 (RAACHGHCVPDYWYET) are extracellular. A helical membrane pass occupies residues 397–417 (SFWLLWANSAVNPVLYPLCHY). Topologically, residues 418 to 445 (SFRRAFTKLLCPQKLKVQPHGSLEQCWK) are cytoplasmic. Ser439 bears the Phosphoserine mark.

Belongs to the G-protein coupled receptor 1 family.

The protein resides in the cell membrane. The H3 subclass of histamine receptors could mediate the histamine signals in CNS and peripheral nervous system. Signals through the inhibition of adenylate cyclase and displays high constitutive activity (spontaneous activity in the absence of agonist). This is Histamine H3 receptor (Hrh3) from Mus musculus (Mouse).